Consider the following 1249-residue polypeptide: Minor capsid protein M1249L (1249 aa).

It belongs to the asfivirus M1249L family. In terms of assembly, interacts with the minor capsid protein p17 and with the hexon capsid protein p72 capsomers; these interactions form a rigid zipper structure that stabilizes the capsomers. Interacts with host IRF3.

It localises to the virion. The protein resides in the host cytoplasm. In terms of biological role, together with the penton and the other minor capsid proteins (p17, p49), forms a complicated network immediately below the outer capsid shell, stabilizing the whole capsid. In addition, blocks IFN-beta transactivation mediated by the cGAS-STING pathway and regulates the transcriptional activity of IFN-beta. Mechanistically, suppresses the phosphorylation of host key adapter protein TBK1 and degrades host IRF3 in the cytoplasm. The protein is Minor capsid protein M1249L of African swine fever virus (isolate Tick/Malawi/Lil 20-1/1983) (ASFV).